A 436-amino-acid chain; its full sequence is Probable ABC transporter binding protein NosD (436 aa).

The signal sequence occupies residues 1–27; that stretch reads MFKAQATFSRYSAAVSLLLLFSGAAQA. PbH1 repeat units follow at residues 85-113, 115-136, 137-166, 167-188, 189-210, 233-255, 293-314, and 316-354; these read APDV…FILP, AERA…FVDG, TRDV…HLFA, VSGA…YIDT, SNGN…HYMF, SRKL…LMNY, SLFN…HLTA, and SEDN…YWSD.

Belongs to the NosD family. In terms of assembly, the complex may be composed of an ATP-binding protein (NosF), a transmembrane protein (NosY) and a solute-binding protein (NosD).

It is found in the periplasm. Required for the assembly of the copper chromophores of nitrous oxide reductase. Could be part of the ABC transporter complex NosDFY. This is Probable ABC transporter binding protein NosD from Stutzerimonas stutzeri (Pseudomonas stutzeri).